The chain runs to 601 residues: Glutamyl-tRNA(Gln) amidotransferase subunit B, mitochondrial (601 aa).

The N-terminal 52 residues, 1 to 52, are a transit peptide targeting the mitochondrion; sequence MLQQWLRQSPGAARFLRGSCCRGPQSGSLRHSPLPTAPHRCIRSLQTSATES.

It belongs to the GatB/GatE family. GatB subfamily. In terms of assembly, subunit of the heterotrimeric GatCAB amidotransferase (AdT) complex, composed of A, B and C subunits.

The protein localises to the mitochondrion. The enzyme catalyses L-glutamyl-tRNA(Gln) + L-glutamine + ATP + H2O = L-glutaminyl-tRNA(Gln) + L-glutamate + ADP + phosphate + H(+). Allows the formation of correctly charged Gln-tRNA(Gln) through the transamidation of misacylated Glu-tRNA(Gln) in the mitochondria. The reaction takes place in the presence of glutamine and ATP through an activated gamma-phospho-Glu-tRNA(Gln). This is Glutamyl-tRNA(Gln) amidotransferase subunit B, mitochondrial from Neosartorya fischeri (strain ATCC 1020 / DSM 3700 / CBS 544.65 / FGSC A1164 / JCM 1740 / NRRL 181 / WB 181) (Aspergillus fischerianus).